Here is a 439-residue protein sequence, read N- to C-terminus: RNA polymerase II-associated protein RBA50 (439 aa).

Disordered regions lie at residues 1–35 and 49–79; these read MDLL…GFPE and LREK…SEAK. A compositionally biased stretch (polar residues) spans 15 to 30; sequence SVESNDNGTLSTNNCG.

Belongs to the RPAP1 family.

Its subcellular location is the cytoplasm. Functionally, forms an interface between the RNA polymerase II enzyme and chaperone/scaffolding proteins, suggesting that it is required to connect RNA polymerase II to regulators of protein complex formation. This Saccharomyces cerevisiae (strain ATCC 204508 / S288c) (Baker's yeast) protein is RNA polymerase II-associated protein RBA50 (RBA50).